The primary structure comprises 625 residues: DNA-directed RNA polymerase subunit gamma (625 aa).

Positions 71, 73, 86, and 89 each coordinate Zn(2+). Residues Asp467, Asp469, and Asp471 each coordinate Mg(2+).

This sequence belongs to the RNA polymerase beta' chain family. RpoC1 subfamily. In terms of assembly, in cyanobacteria the RNAP catalytic core is composed of 2 alpha, 1 beta, 1 beta', 1 gamma and 1 omega subunit. When a sigma factor is associated with the core the holoenzyme is formed, which can initiate transcription. It depends on Mg(2+) as a cofactor. Zn(2+) serves as cofactor.

The enzyme catalyses RNA(n) + a ribonucleoside 5'-triphosphate = RNA(n+1) + diphosphate. Its function is as follows. DNA-dependent RNA polymerase catalyzes the transcription of DNA into RNA using the four ribonucleoside triphosphates as substrates. This chain is DNA-directed RNA polymerase subunit gamma, found in Rippkaea orientalis (strain PCC 8801 / RF-1) (Cyanothece sp. (strain PCC 8801)).